The primary structure comprises 131 residues: Classical arabinogalactan protein 2 (131 aa).

The signal sequence occupies residues 1-21; sequence MNSKAMQALIFLGFLATSCLA. At glutamine 22 the chain carries Pyrrolidone carboxylic acid. Proline 24, proline 26, proline 28, proline 34, and proline 35 each carry 4-hydroxyproline. Proline 24, proline 26, proline 28, proline 34, and proline 35 each carry an O-linked (Ara...) hydroxyproline glycan. Residues 24 to 106 are disordered; that stretch reads PAPAPTTVTP…PGPDGAADAP (83 aa). Pro residues-rich tracts occupy residues 25 to 38 and 49 to 64; these read APAPTTVTPPPTAL and IASPPVPVNEPTPAPT. Composition is skewed to low complexity over residues 65 to 76 and 90 to 106; these read TSPTTSPVASPP and TPTSSPAPGPDGAADAP. A lipid anchor (GPI-anchor amidated serine) is attached at serine 107. Positions 108–131 are cleaved as a propeptide — removed in mature form; the sequence is AAWANKAFLVGTAVAGALYAVVLA.

Belongs to the classical AGP family. Post-translationally, O-glycosylated on hydroxyprolines; noncontiguous hydroxylproline residues are glycosylated with arabinogalactan.

It localises to the cell membrane. Its function is as follows. Proteoglycan that seems to be implicated in diverse developmental roles such as differentiation, cell-cell recognition, embryogenesis and programmed cell death. The polypeptide is Classical arabinogalactan protein 2 (AGP2) (Arabidopsis thaliana (Mouse-ear cress)).